The chain runs to 97 residues: Large ribosomal subunit protein bL27 (97 aa).

Residues 1–12 constitute a propeptide that is removed on maturation; sequence MLKMNLANLQLF. The disordered stretch occupies residues 14–37; it reads HKKGGGSTSNGRDSQAKRLGAKAA.

Belongs to the bacterial ribosomal protein bL27 family. In terms of processing, the N-terminus is cleaved by ribosomal processing cysteine protease Prp.

In Streptococcus agalactiae serotype III (strain NEM316), this protein is Large ribosomal subunit protein bL27.